The following is a 161-amino-acid chain: Afimbrial adhesin AFA-I (161 aa).

An N-terminal signal peptide occupies residues 1-21 (MKKLAIIGATSVMMMTGTAQA).

Belongs to the Dr-adhesin family.

The protein localises to the fimbrium. In terms of biological role, hemagglutinins of uropathogenic E.coli mediate adherence to the upper urinary tract. These adhesins bind to the Dr blood group antigen and also agglutinate human erythrocytes in the presence of D-mannose (mannose-resistant hemagglutination (MRHA)). This chain is Afimbrial adhesin AFA-I (afaE1), found in Escherichia coli.